Consider the following 351-residue polypeptide: MDEKIETRLIGATVQSNEPDLERSIRPKRLSDYIGQAAVREQMDIFIRAATNRREALDHVLIFGPPGLGKTTLAHIIAHEMQAGLKQTSGPVLEKAGDLAALLTNLEPHDVLFIDEIHRLNPAIEEVLYPALEDFQLDIIIGEGPSARSIKLDLPPFTLVGATTRAGLLTSPLRDRFGIVQRLEFYRIPDLIHIVKRAAHILNVVIDENGAGEIARRSRGTPRIANRLLRRVRDFAEVRANGMINESIAKEALDLLNVDIRGLDVMDRKLLETIIKKFQGGPVGIESLAAAISEERGTIEDVIEPYLIQEGFILRTPRGRIATELTYQHFKLPLPTQSTLQENFDLLGKVE.

A large ATPase domain (RuvB-L) region spans residues 1 to 186; sequence MDEKIETRLI…FGIVQRLEFY (186 aa). ATP contacts are provided by residues Ile25, Arg26, Gly67, Lys70, Thr71, Thr72, 133-135, Arg176, Tyr186, and Arg223; that span reads EDF. Thr71 serves as a coordination point for Mg(2+). The tract at residues 187–257 is small ATPAse domain (RuvB-S); sequence RIPDLIHIVK…IAKEALDLLN (71 aa). The head domain (RuvB-H) stretch occupies residues 260–351; the sequence is IRGLDVMDRK…ENFDLLGKVE (92 aa). DNA contacts are provided by Arg296, Arg315, and Arg320.

It belongs to the RuvB family. In terms of assembly, homohexamer. Forms an RuvA(8)-RuvB(12)-Holliday junction (HJ) complex. HJ DNA is sandwiched between 2 RuvA tetramers; dsDNA enters through RuvA and exits via RuvB. An RuvB hexamer assembles on each DNA strand where it exits the tetramer. Each RuvB hexamer is contacted by two RuvA subunits (via domain III) on 2 adjacent RuvB subunits; this complex drives branch migration. In the full resolvosome a probable DNA-RuvA(4)-RuvB(12)-RuvC(2) complex forms which resolves the HJ.

Its subcellular location is the cytoplasm. The catalysed reaction is ATP + H2O = ADP + phosphate + H(+). Functionally, the RuvA-RuvB-RuvC complex processes Holliday junction (HJ) DNA during genetic recombination and DNA repair, while the RuvA-RuvB complex plays an important role in the rescue of blocked DNA replication forks via replication fork reversal (RFR). RuvA specifically binds to HJ cruciform DNA, conferring on it an open structure. The RuvB hexamer acts as an ATP-dependent pump, pulling dsDNA into and through the RuvAB complex. RuvB forms 2 homohexamers on either side of HJ DNA bound by 1 or 2 RuvA tetramers; 4 subunits per hexamer contact DNA at a time. Coordinated motions by a converter formed by DNA-disengaged RuvB subunits stimulates ATP hydrolysis and nucleotide exchange. Immobilization of the converter enables RuvB to convert the ATP-contained energy into a lever motion, pulling 2 nucleotides of DNA out of the RuvA tetramer per ATP hydrolyzed, thus driving DNA branch migration. The RuvB motors rotate together with the DNA substrate, which together with the progressing nucleotide cycle form the mechanistic basis for DNA recombination by continuous HJ branch migration. Branch migration allows RuvC to scan DNA until it finds its consensus sequence, where it cleaves and resolves cruciform DNA. The chain is Holliday junction branch migration complex subunit RuvB from Coxiella burnetii (strain RSA 331 / Henzerling II).